A 203-amino-acid chain; its full sequence is Thymidylate kinase (203 aa).

Residue 9–16 (GPEGAGKT) participates in ATP binding.

The protein belongs to the thymidylate kinase family.

The catalysed reaction is dTMP + ATP = dTDP + ADP. In terms of biological role, phosphorylation of dTMP to form dTDP in both de novo and salvage pathways of dTTP synthesis. This Staphylococcus epidermidis (strain ATCC 35984 / DSM 28319 / BCRC 17069 / CCUG 31568 / BM 3577 / RP62A) protein is Thymidylate kinase.